We begin with the raw amino-acid sequence, 132 residues long: Agouti-signaling protein (132 aa).

An N-terminal signal peptide occupies residues 1–22 (MDVTRLLLATLLVFLCFFTVYS). Residue Asn39 is glycosylated (N-linked (GlcNAc...) asparagine). The segment at 61 to 87 (HISRKEAEKKRSSKKEASMKKVARPRT) is disordered. The span at 64-79 (RKEAEKKRSSKKEASM) shows a compositional bias: basic and acidic residues. Cystine bridges form between Cys93-Cys108, Cys100-Cys114, Cys107-Cys125, Cys111-Cys132, and Cys116-Cys123. The region spanning 93-132 (CVATRDSCKPPAPACCDPCASCQCRFFRSACSCRVLSLNC) is the Agouti domain.

It is found in the secreted. Its function is as follows. Involved in the regulation of melanogenesis. The binding of ASP to MC1R precludes alpha-MSH initiated signaling and thus blocks production of cAMP, leading to a down-regulation of eumelanogenesis (brown/black pigment) and thus increasing synthesis of pheomelanin (yellow/red pigment). The protein is Agouti-signaling protein (ASIP) of Colobus polykomos (Western black-and-white colobus monkey).